The primary structure comprises 322 residues: Methionyl-tRNA formyltransferase (322 aa).

113–116 is a (6S)-5,6,7,8-tetrahydrofolate binding site; the sequence is SLLP.

Belongs to the Fmt family.

The catalysed reaction is L-methionyl-tRNA(fMet) + (6R)-10-formyltetrahydrofolate = N-formyl-L-methionyl-tRNA(fMet) + (6S)-5,6,7,8-tetrahydrofolate + H(+). In terms of biological role, attaches a formyl group to the free amino group of methionyl-tRNA(fMet). The formyl group appears to play a dual role in the initiator identity of N-formylmethionyl-tRNA by promoting its recognition by IF2 and preventing the misappropriation of this tRNA by the elongation apparatus. This Bacteroides thetaiotaomicron (strain ATCC 29148 / DSM 2079 / JCM 5827 / CCUG 10774 / NCTC 10582 / VPI-5482 / E50) protein is Methionyl-tRNA formyltransferase.